Here is a 215-residue protein sequence, read N- to C-terminus: Chaperone protein TorD (215 aa).

Belongs to the TorD/DmsD family. TorD subfamily.

It localises to the cytoplasm. In terms of biological role, involved in the biogenesis of TorA. Acts on TorA before the insertion of the molybdenum cofactor and, as a result, probably favors a conformation of the apoenzyme that is competent for acquiring the cofactor. This chain is Chaperone protein TorD, found in Vibrio atlanticus (strain LGP32) (Vibrio splendidus (strain Mel32)).